Reading from the N-terminus, the 254-residue chain is MLSGLVTALRTLTVLPVPGRDAERFSSSLYWFPVVGLVIGGIVVLFARAGMGAGWPELAAVLALLGGFILTRGLHADGLADLADGFFGGRNREAALRIMKDPNVGSFGSLALIGVMLFKWICLLELARAGAYGMIAAGVVLSRTAQVLLAARMPYARSEGGTATAFVEDAGWPHLLVASVSGVVLLFVLLDWQVVPSSILLFGSVVALFFVGWLSHRKIGGITGDVLGACSELVEIAVWFVAALWLKGLFSAIA.

The next 7 helical transmembrane spans lie at 27–47 (SSLY…VLFA), 50–70 (GMGA…GFIL), 104–124 (VGSF…ICLL), 131–151 (AYGM…LLAA), 170–190 (AGWP…FVLL), 194–214 (VVPS…VGWL), and 233–253 (LVEI…FSAI).

The protein belongs to the CobS family. Requires Mg(2+) as cofactor.

It is found in the cell inner membrane. The enzyme catalyses alpha-ribazole + adenosylcob(III)inamide-GDP = adenosylcob(III)alamin + GMP + H(+). The catalysed reaction is alpha-ribazole 5'-phosphate + adenosylcob(III)inamide-GDP = adenosylcob(III)alamin 5'-phosphate + GMP + H(+). It functions in the pathway cofactor biosynthesis; adenosylcobalamin biosynthesis; adenosylcobalamin from cob(II)yrinate a,c-diamide: step 7/7. Functionally, joins adenosylcobinamide-GDP and alpha-ribazole to generate adenosylcobalamin (Ado-cobalamin). Also synthesizes adenosylcobalamin 5'-phosphate from adenosylcobinamide-GDP and alpha-ribazole 5'-phosphate. In Chlorobaculum parvum (strain DSM 263 / NCIMB 8327) (Chlorobium vibrioforme subsp. thiosulfatophilum), this protein is Adenosylcobinamide-GDP ribazoletransferase.